The sequence spans 589 residues: Probable translation initiation factor IF-2 (589 aa).

The region spanning 5 to 219 is the tr-type G domain; that stretch reads IRTPIVCVLG…IMIGLAQRYL (215 aa). Residues 14–21 are G1; that stretch reads GHVDHGKT. GTP is bound at residue 14 to 21; it reads GHVDHGKT. The tract at residues 39 to 43 is G2; that stretch reads AITQH. Positions 75–78 are G3; it reads DTPG. Residues 75–79 and 129–132 contribute to the GTP site; these read DTPGH and TKLD. Positions 129–132 are G4; sequence TKLD. The tract at residues 197 to 199 is G5; that stretch reads SSM.

Belongs to the TRAFAC class translation factor GTPase superfamily. Classic translation factor GTPase family. IF-2 subfamily.

Its function is as follows. Function in general translation initiation by promoting the binding of the formylmethionine-tRNA to ribosomes. Seems to function along with eIF-2. This Methanocorpusculum labreanum (strain ATCC 43576 / DSM 4855 / Z) protein is Probable translation initiation factor IF-2.